Consider the following 632-residue polypeptide: FAD-binding monooxygenase ausB (632 aa).

Positions 1-50 are disordered; it reads MASAPEVESVKTPDPASTKTQHTSIAEIHTADQTWNNESNTRLPPNHRHH. Polar residues-rich tracts occupy residues 15–24 and 31–43; these read PASTKTQHTS and ADQT…NTRL. FAD is bound by residues 116-119, 128-129, and Y134; these read TWYW and DI. 126-128 lines the NADP(+) pocket; it reads MCD. NADP(+) contacts are provided by residues 269 to 275 and 292 to 293; these read TGSTAIQ and RT.

It belongs to the FAD-binding monooxygenase family. Requires FAD as cofactor.

The catalysed reaction is protoaustinoid A + AH2 + O2 = berkeleyone A + A + H2O. The protein operates within secondary metabolite biosynthesis; terpenoid biosynthesis. Functionally, FAD-binding monooxygenase; part of the gene cluster that mediates the biosynthesis of calidodehydroaustin, a fungal meroterpenoid. The first step of the pathway is the synthesis of 3,5-dimethylorsellinic acid by the polyketide synthase ausA. 3,5-dimethylorsellinic acid is then prenylated by the polyprenyl transferase ausN. Further epoxidation by the FAD-dependent monooxygenase ausM and cyclization by the probable terpene cyclase ausL lead to the formation of protoaustinoid A. Protoaustinoid A is then oxidized to spiro-lactone preaustinoid A3 by the combined action of the FAD-binding monooxygenases ausB and ausC, and the dioxygenase ausE. Acid-catalyzed keto-rearrangement and ring contraction of the tetraketide portion of preaustinoid A3 by ausJ lead to the formation of preaustinoid A4. The aldo-keto reductase ausK, with the help of ausH, is involved in the next step by transforming preaustinoid A4 into isoaustinone which is in turn hydroxylated by the P450 monooxygenase ausI to form austinolide. The cytochrome P450 monooxygenase ausG modifies austinolide to austinol. Austinol is further acetylated to austin by the O-acetyltransferase ausP, which spontaneously changes to dehydroaustin. The cytochrome P450 monooxygenase ausR then converts dehydroaustin is into 7-dehydrodehydroaustin. The hydroxylation catalyzed by ausR permits the O-acetyltransferase ausQ to add an additional acetyl group to the molecule, leading to the formation of acetoxydehydroaustin. The short chain dehydrogenase ausT catalyzes the reduction of the double bond present between carbon atoms 1 and 2 to convert 7-dehydrodehydroaustin into 1,2-dihydro-7-hydroxydehydroaustin. AusQ catalyzes not only an acetylation reaction but also the addition of the PKS ausV diketide product to 1,2-dihydro-7-hydroxydehydroaustin, forming precalidodehydroaustin. Finally, the iron/alpha-ketoglutarate-dependent dioxygenase converts precalidodehydroaustin into calidodehydroaustin. The protein is FAD-binding monooxygenase ausB of Aspergillus calidoustus.